A 440-amino-acid chain; its full sequence is Streptokinase G (440 aa).

Positions 1–26 (MKNYLSFGMFALLFALTFGTVNSVQA) are cleaved as a signal peptide.

This protein is not a protease, but it activates plasminogen by complexing with it. As a potential virulence factor, it is thought to prevent the formation of effective fibrin barriers around the site of infection, thereby contributing to the invasiveness of the cells. This Streptococcus sp. (strain 19909) protein is Streptokinase G (skg).